The sequence spans 531 residues: 2,3-bisphosphoglycerate-independent phosphoglycerate mutase (531 aa).

Mn(2+) is bound by residues aspartate 15 and serine 65. Residue serine 65 is the Phosphoserine intermediate of the active site. Substrate-binding positions include histidine 126, 155–156, arginine 187, arginine 193, 257–260, and lysine 330; these read RD and RPDR. The Mn(2+) site is built by aspartate 397, histidine 401, aspartate 438, histidine 439, and histidine 456.

Belongs to the BPG-independent phosphoglycerate mutase family. In terms of assembly, monomer. Mn(2+) is required as a cofactor.

The catalysed reaction is (2R)-2-phosphoglycerate = (2R)-3-phosphoglycerate. It participates in carbohydrate degradation; glycolysis; pyruvate from D-glyceraldehyde 3-phosphate: step 3/5. Functionally, catalyzes the interconversion of 2-phosphoglycerate and 3-phosphoglycerate. The protein is 2,3-bisphosphoglycerate-independent phosphoglycerate mutase of Thermosynechococcus vestitus (strain NIES-2133 / IAM M-273 / BP-1).